Consider the following 2056-residue polypeptide: E3 ubiquitin-protein ligase TRIP12 (2056 aa).

Polar residues-rich tracts occupy residues 1 to 10 and 18 to 27; these read MSSRPNNNPG and RNTAGAQPQE. The disordered stretch occupies residues 1-440; that stretch reads MSSRPNNNPG…SGESESDDSE (440 aa). The segment covering 39–51 has biased composition (basic and acidic residues); it reads AENKTHSLPESRK. 2 stretches are compositionally biased toward polar residues: residues 58–67 and 153–168; these read KVQSNTTSGP and SQEQPFPSASLPSTSK. 2 stretches are compositionally biased toward low complexity: residues 213–226 and 234–253; these read LSKLASKSATSAKA and SSSSASTSSSSSAVASVSAA. Polar residues-rich tracts occupy residues 317 to 327 and 363 to 375; these read PGSSKTETSKP and QKTTGSCASTSRR. Over residues 383-395 the composition is skewed to basic and acidic residues; it reads AAAEARRQEKMAD. Low complexity predominate over residues 415-433; sequence GAAASSSVAGAVGMTTSGE. Positions 791–905 constitute a WWE domain; it reads MLKKGNAQNT…DPELAKSFIK (115 aa). The span at 1027–1042 shows a compositional bias: low complexity; the sequence is TTISTGSGTASGNSAA. Disordered stretches follow at residues 1027 to 1147, 1465 to 1500, and 1632 to 1651; these read TTIS…ASKD, EEEESAKDTVGGKRGRAQTAPTKTSPRNSKKHDELW, and TNPEINQSDSQDSRVAPRLD. Residues 1069 to 1082 are compositionally biased toward basic residues; it reads KRKRLPKRGPRRPK. Residues 1085–1094 are compositionally biased toward basic and acidic residues; the sequence is PPRDEDKVDN. Polar residues-rich tracts occupy residues 1095-1106 and 1119-1129; these read QAKSPTTTQSPK and RLSTQSNSNNI. The segment at 1560 to 1634 is K-box; the sequence is EIIPTSEFNN…AMQRLLDTNP (75 aa). Positions 1949–2056 constitute an HECT domain; the sequence is PDHGYTHDSR…REGQQSFHLS (108 aa). Residue Cys2023 is the Glycyl thioester intermediate of the active site.

Belongs to the UPL family. K-HECT subfamily.

The protein localises to the nucleus. It localises to the nucleoplasm. It carries out the reaction S-ubiquitinyl-[E2 ubiquitin-conjugating enzyme]-L-cysteine + [acceptor protein]-L-lysine = [E2 ubiquitin-conjugating enzyme]-L-cysteine + N(6)-ubiquitinyl-[acceptor protein]-L-lysine.. It functions in the pathway protein modification; protein ubiquitination. In terms of biological role, E3 ubiquitin-protein ligase involved in ubiquitin fusion degradation (UFD) pathway and regulation of DNA repair. Part of the ubiquitin fusion degradation (UFD) pathway, a process that mediates ubiquitination of protein at their N-terminus, regardless of the presence of lysine residues in target proteins. Acts as a key regulator of DNA damage response by acting as a suppressor of RNF168, an E3 ubiquitin-protein ligase that promotes accumulation of 'Lys-63'-linked histone H2A and H2AX at DNA damage sites, thereby acting as a guard against excessive spreading of ubiquitinated chromatin at damaged chromosomes. The chain is E3 ubiquitin-protein ligase TRIP12 (trip12) from Xenopus tropicalis (Western clawed frog).